The sequence spans 329 residues: Acetyl-coenzyme A carboxylase carboxyl transferase subunit alpha (329 aa).

Positions Gln40–Glu294 constitute a CoA carboxyltransferase C-terminal domain.

Belongs to the AccA family. In terms of assembly, acetyl-CoA carboxylase is a heterohexamer composed of biotin carboxyl carrier protein (AccB), biotin carboxylase (AccC) and two subunits each of ACCase subunit alpha (AccA) and ACCase subunit beta (AccD).

It is found in the cytoplasm. The catalysed reaction is N(6)-carboxybiotinyl-L-lysyl-[protein] + acetyl-CoA = N(6)-biotinyl-L-lysyl-[protein] + malonyl-CoA. The protein operates within lipid metabolism; malonyl-CoA biosynthesis; malonyl-CoA from acetyl-CoA: step 1/1. Functionally, component of the acetyl coenzyme A carboxylase (ACC) complex. First, biotin carboxylase catalyzes the carboxylation of biotin on its carrier protein (BCCP) and then the CO(2) group is transferred by the carboxyltransferase to acetyl-CoA to form malonyl-CoA. This is Acetyl-coenzyme A carboxylase carboxyl transferase subunit alpha from Prochlorococcus marinus (strain MIT 9313).